Reading from the N-terminus, the 110-residue chain is Putative UPF0377 protein YIR040C (110 aa).

Belongs to the UPF0377 family.

This Saccharomyces cerevisiae (strain ATCC 204508 / S288c) (Baker's yeast) protein is Putative UPF0377 protein YIR040C.